The following is a 520-amino-acid chain: Protein OS-9 homolog (520 aa).

The N-terminal stretch at 1–23 (MIRRIRTLTPLLVLACAGSGAWA) is a signal peptide. A compositionally biased stretch (polar residues) spans 121–135 (QVDNGNRDQTNGAES). The segment at 121–144 (QVDNGNRDQTNGAESTSKEDEQRE) is disordered. The region spanning 161-302 (GKCMYYISGW…VIYTPRLCND (142 aa)) is the MRH domain. A disulfide bridge connects residues Cys-163 and Cys-176. Residues Trp-170, Trp-171, Gln-183, Asp-257, Arg-263, Glu-284, and Tyr-290 each coordinate a mannooligosaccharide derivative. Disulfide bonds link Cys-256-Cys-288 and Cys-271-Cys-300. The interval 442–520 (GLVGTVDSND…SEEIFFKDEL (79 aa)) is disordered. Polar residues predominate over residues 461 to 471 (GSISQPAQGTT). Residues 473–499 (DKGESNAETGEEKKKADEKIDHYEPEK) are compositionally biased toward basic and acidic residues. The Prevents secretion from ER motif lies at 517–520 (KDEL).

Belongs to the OS-9 family. As to quaternary structure, interacts with missfolded ER lumenal proteins.

It is found in the endoplasmic reticulum membrane. Functionally, lectin involved in the quality control of the secretory pathway. As a member of the endoplasmic reticulum-associated degradation lumenal (ERAD-L) surveillance system, targets misfolded endoplasmic reticulum lumenal glycoproteins for degradation. The sequence is that of Protein OS-9 homolog (yos9) from Aspergillus fumigatus (strain ATCC MYA-4609 / CBS 101355 / FGSC A1100 / Af293) (Neosartorya fumigata).